The chain runs to 355 residues: Uroporphyrinogen decarboxylase (355 aa).

Substrate is bound by residues 27-31 (RQAGR), D77, Y154, T209, and H328.

The protein belongs to the uroporphyrinogen decarboxylase family. Homodimer.

The protein resides in the cytoplasm. The enzyme catalyses uroporphyrinogen III + 4 H(+) = coproporphyrinogen III + 4 CO2. The protein operates within porphyrin-containing compound metabolism; protoporphyrin-IX biosynthesis; coproporphyrinogen-III from 5-aminolevulinate: step 4/4. Catalyzes the decarboxylation of four acetate groups of uroporphyrinogen-III to yield coproporphyrinogen-III. The polypeptide is Uroporphyrinogen decarboxylase (Vibrio campbellii (strain ATCC BAA-1116)).